The following is a 209-amino-acid chain: MIGLVGKKVGMTRIFTEDGVSIPVTVIEIEANRVTQVKDLANDGYRAVQVTTGAKKANRVTKPEAGHFAKAGVEAGRTLREFRLSEGEEFTVGQSISVEIFADVKKVDVTGTSKGKGFAGTVKRWNFRTQDATHGNSLSHRVPGSIGQNQTPGKVFKGKKMAGQLGNERVTVQSLDVVRVDAERNLLLVKGAVPGATGSDLIVKPAVKA.

Residues 133-153 (THGNSLSHRVPGSIGQNQTPG) form a disordered region. Position 150 is an N5-methylglutamine (Q150).

It belongs to the universal ribosomal protein uL3 family. In terms of assembly, part of the 50S ribosomal subunit. Forms a cluster with proteins L14 and L19. In terms of processing, methylated by PrmB.

In terms of biological role, one of the primary rRNA binding proteins, it binds directly near the 3'-end of the 23S rRNA, where it nucleates assembly of the 50S subunit. This Pectobacterium carotovorum subsp. carotovorum (strain PC1) protein is Large ribosomal subunit protein uL3.